A 505-amino-acid chain; its full sequence is MASGRRAPRTGLLELRAGAGSGAGGERWQRAVLSLEEDALTVSPADGEPGPEPGAQREPEPAQLNGAAEPGAASPPLPEALLLQPRRVTVRKADAGGLGISIKGGRENKMPILISKIFKGLAADQTEALFVGDAILSVNGEDLSSATHDEAVQVLKKTGKEVVLEVKYMKEVSPYFKNSASGTSVGWDSPPASPLQRQPSSPGPPPRDLRDAKHMSLKMAYVSRRCTPTDPETRYLEICSADGRDTLFLRAKDEASAKSWAAAIQAQVNTLTPRVKDELQALLSATSTAGSQDIKRIGWLTEQLPSGGTAPTLALLTEKELLLYSCLPQTREALSRPARTAPLITTRLVHSGPSKGSVPYDAELSFALRTGTRHGVDTHLFSVESPQELAAWTRQLVDGCHRAAEGVQEVSTACTWNGRACSLSVHIDNGFTLWAAEPGAARAVLLRQPFEKLQMSSDDGASLLFLDFGGAEGEIQLDLHSCPKTMVFIIHSFLSAKVTRLGLLA.

The interval 1–77 is disordered; the sequence is MASGRRAPRT…AEPGAASPPL (77 aa). PH domains are found at residues 6–269 and 293–401; these read RAPR…AQVN and DIKR…DGCH. Residues 87 to 170 form the PDZ domain; that stretch reads RVTVRKADAG…EVVLEVKYMK (84 aa). Phosphoserine occurs at positions 101, 184, 189, 193, and 200. Positions 180 to 211 are disordered; that stretch reads ASGTSVGWDSPPASPLQRQPSSPGPPPRDLRD. Residues 449–505 form the SU domain; that stretch reads PFEKLQMSSDDGASLLFLDFGGAEGEIQLDLHSCPKTMVFIIHSFLSAKVTRLGLLA. The calmodulin-binding stretch occupies residues 483–505; it reads PKTMVFIIHSFLSAKVTRLGLLA.

The protein belongs to the syntrophin family. As to quaternary structure, monomer and homodimer. Interacts with the dystrophin related protein DTNA; SGCG of the dystrophin glycoprotein complex; NOS1; GRB2; GA; TGFA; MAPK12 and the sodium channel proteins SCN4A and SCN5A. Interacts with the dystrophin protein DMD in a calmodulin dependent manner and with related protein UTRN; SGCA of the dystrophin glycoprotein complex; F-actin; calmodulin and with the other members of the syntrophin family SNTB1 and SNTB2. Interacts with MYOC; regulates muscle hypertrophy. Interacts with DTNB. Phosphorylated by CaM-kinase II. Phosphorylation may inhibit the interaction with DMD.

Its subcellular location is the cell membrane. The protein localises to the sarcolemma. The protein resides in the cell junction. It is found in the cytoplasm. It localises to the cytoskeleton. Functionally, adapter protein that binds to and probably organizes the subcellular localization of a variety of membrane proteins. May link various receptors to the actin cytoskeleton and the extracellular matrix via the dystrophin glycoprotein complex. Plays an important role in synapse formation and in the organization of UTRN and acetylcholine receptors at the neuromuscular synapse. Binds to phosphatidylinositol 4,5-bisphosphate. The protein is Alpha-1-syntrophin (SNTA1) of Bos taurus (Bovine).